We begin with the raw amino-acid sequence, 400 residues long: NAD-dependent protein deacetylase sirtuin-7 (400 aa).

Residues 1-27 form a disordered region; sequence MAAGGLSRSERKAAERVRRLREEQQRE. Basic and acidic residues predominate over residues 8 to 27; the sequence is RSERKAAERVRRLREEQQRE. The Deacetylase sirtuin-type domain occupies 82–329; sequence PEELRGKVRE…RLLMAELGLE (248 aa). NAD(+)-binding positions include 107-126 and 167-170; these read GAGI…NGVW and QNCD. The active-site Proton acceptor is histidine 187. Positions 195, 198, 225, and 228 each coordinate Zn(2+). NAD(+)-binding positions include 268–270, 297–299, and cysteine 315; these read GSS and NLQ. The interval 354–380 is disordered; that stretch reads SHSRKSLCRSREEAPPGDRGAPLSSAP. At arginine 388 the chain carries Asymmetric dimethylarginine; alternate. Arginine 388 bears the Omega-N-methylarginine; alternate mark.

The protein belongs to the sirtuin family. Class IV subfamily. Interacts with UBTF and the RNA polymerase I complex. Interacts with components of the B-WICH complex, such as MYBBP1A, SMARCA5/SNF2H and BAZ1B/WSTF. Interacts with ELK4, leading to stabilization at target promoters for H3K18Ac deacetylation. Interacts with histone H2A and/or histone H2B. Interacts with DNMT1. Interacts with SIRT1. Zn(2+) serves as cofactor. Post-translationally, phosphorylated during mitosis. In terms of processing, methylation at Arg-388 by PRMT6 inhibits the H3K18Ac histone deacetylase activity, promoting mitochondria biogenesis and maintaining mitochondria respiration. Ubiquitinated via 'Lys-63'-linked ubiquitin chains. Deubiquitinated by USP7, inhibiting the H3K18Ac histone deacetylase activity and regulating gluconeogenesis. Ubiquitinated by E3 ubiquitin-protein ligase complex containing FBXO7; leading to proteasomal degradation.

It localises to the nucleus. The protein resides in the nucleolus. It is found in the nucleoplasm. The protein localises to the chromosome. Its subcellular location is the cytoplasm. It catalyses the reaction N(6)-acetyl-L-lysyl-[protein] + NAD(+) + H2O = 2''-O-acetyl-ADP-D-ribose + nicotinamide + L-lysyl-[protein]. The catalysed reaction is N(6)-glutaryl-L-lysyl-[protein] + NAD(+) + H2O = 2''-O-glutaryl-ADP-D-ribose + nicotinamide + L-lysyl-[protein]. The enzyme catalyses N(6)-succinyl-L-lysyl-[protein] + NAD(+) + H2O = 2''-O-succinyl-ADP-D-ribose + nicotinamide + L-lysyl-[protein]. It carries out the reaction N(6)-propanoyl-L-lysyl-[protein] + NAD(+) + H2O = 3''-O-propanoyl-ADP-D-ribose + nicotinamide + L-lysyl-[protein]. It catalyses the reaction N(6)-decanoyl-L-lysyl-[protein] + NAD(+) + H2O = 2''-O-decanoyl-ADP-D-ribose + nicotinamide + L-lysyl-[protein]. Its activity is regulated as follows. NAD-dependent protein-lysine deacetylase and deacylase activities are activated by nucleic acids. Histone deacetylase activity is activated by DNA and nucleosomes. Protein-lysine deacylase activity is activated by RNA. H3K18Ac histone deacetylase activity is inhibited by methylation at Arg-388. H3K18Ac histone deacetylase activity is inhibited by deubiquitination by USP7. NAD-dependent protein-lysine deacylase that can act both as a deacetylase or deacylase (desuccinylase, depropionylase, deglutarylase and dedecanoylase), depending on the context. Specifically mediates deacetylation of histone H3 at 'Lys-18' (H3K18Ac). In contrast to other histone deacetylases, displays strong preference for a specific histone mark, H3K18Ac, directly linked to control of gene expression. H3K18Ac is mainly present around the transcription start site of genes and has been linked to activation of nuclear hormone receptors; SIRT7 thereby acts as a transcription repressor. Moreover, H3K18 hypoacetylation has been reported as a marker of malignancy in various cancers and seems to maintain the transformed phenotype of cancer cells. Also able to mediate deacetylation of histone H3 at 'Lys-36' (H3K36Ac) in the context of nucleosomes. Also mediates deacetylation of non-histone proteins, such as ATM, CDK9, DDX21, DDB1, FBL, FKBP5/FKBP51, GABPB1, RAN, RRP9/U3-55K and POLR1E/PAF53. Enriched in nucleolus where it stimulates transcription activity of the RNA polymerase I complex. Acts by mediating the deacetylation of the RNA polymerase I subunit POLR1E/PAF53, thereby promoting the association of RNA polymerase I with the rDNA promoter region and coding region. In response to metabolic stress, SIRT7 is released from nucleoli leading to hyperacetylation of POLR1E/PAF53 and decreased RNA polymerase I transcription. Required to restore the transcription of ribosomal RNA (rRNA) at the exit from mitosis. Promotes pre-ribosomal RNA (pre-rRNA) cleavage at the 5'-terminal processing site by mediating deacetylation of RRP9/U3-55K, a core subunit of the U3 snoRNP complex. Mediates 'Lys-37' deacetylation of Ran, thereby regulating the nuclear export of NF-kappa-B subunit RELA/p65. Acts as a regulator of DNA damage repair by mediating deacetylation of ATM during the late stages of DNA damage response, promoting ATM dephosphorylation and deactivation. Suppresses the activity of the DCX (DDB1-CUL4-X-box) E3 ubiquitin-protein ligase complexes by mediating deacetylation of DDB1, which prevents the interaction between DDB1 and CUL4 (CUL4A or CUL4B). Activates RNA polymerase II transcription by mediating deacetylation of CDK9, thereby promoting 'Ser-2' phosphorylation of the C-terminal domain (CTD) of RNA polymerase II. Deacetylates FBL, promoting histone-glutamine methyltransferase activity of FBL. Acts as a regulator of mitochondrial function by catalyzing deacetylation of GABPB1. Regulates Akt/AKT1 activity by mediating deacetylation of FKBP5/FKBP51. Required to prevent R-loop-associated DNA damage and transcription-associated genomic instability by mediating deacetylation and subsequent activation of DDX21, thereby overcoming R-loop-mediated stalling of RNA polymerases. In addition to protein deacetylase activity, also acts as a protein-lysine deacylase. Acts as a protein depropionylase by mediating depropionylation of Osterix (SP7), thereby regulating bone formation by osteoblasts. Acts as a histone deglutarylase by mediating deglutarylation of histone H4 on 'Lys-91' (H4K91glu); a mark that destabilizes nucleosomes by promoting dissociation of the H2A-H2B dimers from nucleosomes. Acts as a histone desuccinylase: in response to DNA damage, recruited to DNA double-strand breaks (DSBs) and catalyzes desuccinylation of histone H3 on 'Lys-122' (H3K122succ), thereby promoting chromatin condensation and DSB repair. Also promotes DSB repair by promoting H3K18Ac deacetylation, regulating non-homologous end joining (NHEJ). Along with its role in DNA repair, required for chromosome synapsis during prophase I of female meiosis by catalyzing H3K18Ac deacetylation. Involved in transcriptional repression of LINE-1 retrotransposon via H3K18Ac deacetylation, and promotes their association with the nuclear lamina. Required to stabilize ribosomal DNA (rDNA) heterochromatin and prevent cellular senescence induced by rDNA instability. Acts as a negative regulator of SIRT1 by preventing autodeacetylation of SIRT1, restricting SIRT1 deacetylase activity. The protein is NAD-dependent protein deacetylase sirtuin-7 of Homo sapiens (Human).